A 232-amino-acid polypeptide reads, in one-letter code: Protein shisa-3 (232 aa).

A signal peptide spans Met1–Ala19. Topologically, residues Gln20–Pro93 are lumenal. A helical membrane pass occupies residues Phe94–Tyr114. Residues Cys115–Ser232 are Cytoplasmic-facing. The disordered stretch occupies residues Thr146–Ser185. Residues Arg151–Arg177 are compositionally biased toward low complexity.

Belongs to the shisa family. In terms of assembly, interacts with fzd8 and fgfr1.

It is found in the endoplasmic reticulum membrane. Plays an essential role in the maturation of presomitic mesoderm cells by individual attenuation of both fgf and wnt signaling. Regulates head and somite developmen. Inhibits both wnt and fgf signaling through the regulation of protein maturation and cell surface transportation of their receptors within the endoplasmic reticulum. The chain is Protein shisa-3 (shisa3) from Xenopus laevis (African clawed frog).